Here is a 366-residue protein sequence, read N- to C-terminus: Ferredoxin--NADP reductase, leaf isozyme 2, chloroplastic (366 aa).

The transit peptide at 1-48 (MAAVNTVSSLPCSKAGAAVAGGAPRPSTCSVFYPPRCWSKRSSGNGVR) directs the protein to the chloroplast. An FAD-binding FR-type domain is found at 87 to 209 (KEPYTGRCLL…TGPVGKEMLM (123 aa)). FAD contacts are provided by residues 145–148 (RLYS), 166–168 (CVK), Tyr172, and 183–185 (VCS). Positions 148 and 168 each coordinate NADP(+). Cys184 and Cys189 are joined by a disulfide. The residue at position 185 (Ser185) is a Phosphoserine. The residue at position 216 (Thr216) is a Phosphothreonine. FAD is bound at residue Thr224. Residues Thr224, 256–257 (VP), 286–287 (SR), Lys296, 325–326 (GL), and Glu364 each bind NADP(+).

It belongs to the ferredoxin--NADP reductase type 1 family. As to quaternary structure, heterodimer with LFNR1. Component of high molecular weight thylakoid LFNRs-containing protein complexes containing LIR1, LFNR1, LFNR2, TIC62 and TROL proteins. Interacts directly with LIR1 and TIC62; LIR1 increases the affinity of LFNR1 and LFNR2 for TIC62. Requires FAD as cofactor. In terms of processing, may form interchain disulfide bonds with LIR1.

It is found in the plastid. Its subcellular location is the chloroplast stroma. The protein localises to the chloroplast thylakoid membrane. It carries out the reaction 2 reduced [2Fe-2S]-[ferredoxin] + NADP(+) + H(+) = 2 oxidized [2Fe-2S]-[ferredoxin] + NADPH. It participates in energy metabolism; photosynthesis. Functionally, plays a key role in regulating the relative amounts of cyclic and non-cyclic electron flow to meet the demands of the plant for ATP and reducing power. The chain is Ferredoxin--NADP reductase, leaf isozyme 2, chloroplastic from Oryza sativa subsp. japonica (Rice).